The chain runs to 232 residues: Chalcone--flavanone isomerase (232 aa).

Positions 50 and 192 each coordinate substrate.

It belongs to the chalcone isomerase family.

It catalyses the reaction a chalcone = a flavanone.. It participates in secondary metabolite biosynthesis; flavonoid biosynthesis. In terms of biological role, catalyzes the intramolecular cyclization of bicyclic chalcones into tricyclic (S)-flavanones. Responsible for the isomerization of 4,2',4',6'-tetrahydroxychalcone (also termed chalcone) into naringenin. This is Chalcone--flavanone isomerase (CHI) from Saussurea medusa (Saw-wort).